Consider the following 307-residue polypeptide: Elongation factor Ts (307 aa).

Residues 80 to 83 (TDFV) are involved in Mg(2+) ion dislocation from EF-Tu.

This sequence belongs to the EF-Ts family.

It is found in the cytoplasm. Functionally, associates with the EF-Tu.GDP complex and induces the exchange of GDP to GTP. It remains bound to the aminoacyl-tRNA.EF-Tu.GTP complex up to the GTP hydrolysis stage on the ribosome. This Zymomonas mobilis subsp. mobilis (strain ATCC 31821 / ZM4 / CP4) protein is Elongation factor Ts (tsf).